We begin with the raw amino-acid sequence, 192 residues long: Nucleotidase CA_C3379 (192 aa).

The protein belongs to the 5'(3')-deoxyribonucleotidase family. The cofactor is Mg(2+).

It carries out the reaction sugar phosphate + H2O = sugar + phosphate.. Functionally, catalyzes the dephosphorylation of nucleotide monophosphates and of different sugar phosphates in vitro. This is Nucleotidase CA_C3379 from Clostridium acetobutylicum (strain ATCC 824 / DSM 792 / JCM 1419 / IAM 19013 / LMG 5710 / NBRC 13948 / NRRL B-527 / VKM B-1787 / 2291 / W).